A 349-amino-acid chain; its full sequence is Phosphoribosylformylglycinamidine cyclo-ligase (349 aa).

Belongs to the AIR synthase family.

It is found in the cytoplasm. It catalyses the reaction 2-formamido-N(1)-(5-O-phospho-beta-D-ribosyl)acetamidine + ATP = 5-amino-1-(5-phospho-beta-D-ribosyl)imidazole + ADP + phosphate + H(+). It participates in purine metabolism; IMP biosynthesis via de novo pathway; 5-amino-1-(5-phospho-D-ribosyl)imidazole from N(2)-formyl-N(1)-(5-phospho-D-ribosyl)glycinamide: step 2/2. This chain is Phosphoribosylformylglycinamidine cyclo-ligase, found in Psychrobacter cryohalolentis (strain ATCC BAA-1226 / DSM 17306 / VKM B-2378 / K5).